Consider the following 98-residue polypeptide: Small ribosomal subunit protein bS6 (98 aa).

It belongs to the bacterial ribosomal protein bS6 family.

Its function is as follows. Binds together with bS18 to 16S ribosomal RNA. The polypeptide is Small ribosomal subunit protein bS6 (Staphylococcus carnosus (strain TM300)).